A 177-amino-acid chain; its full sequence is Adenine phosphoribosyltransferase (177 aa).

Belongs to the purine/pyrimidine phosphoribosyltransferase family. Homodimer.

The protein localises to the cytoplasm. The enzyme catalyses AMP + diphosphate = 5-phospho-alpha-D-ribose 1-diphosphate + adenine. Its pathway is purine metabolism; AMP biosynthesis via salvage pathway; AMP from adenine: step 1/1. In terms of biological role, catalyzes a salvage reaction resulting in the formation of AMP, that is energically less costly than de novo synthesis. The polypeptide is Adenine phosphoribosyltransferase (Chlorobium limicola (strain DSM 245 / NBRC 103803 / 6330)).